The following is a 60-amino-acid chain: Large ribosomal subunit protein uL30 (60 aa).

It belongs to the universal ribosomal protein uL30 family. As to quaternary structure, part of the 50S ribosomal subunit.

The polypeptide is Large ribosomal subunit protein uL30 (Polaromonas naphthalenivorans (strain CJ2)).